We begin with the raw amino-acid sequence, 213 residues long: Probable RNA 2'-phosphotransferase (213 aa).

Belongs to the KptA/TPT1 family.

Functionally, removes the 2'-phosphate from RNA via an intermediate in which the phosphate is ADP-ribosylated by NAD followed by a presumed transesterification to release the RNA and generate ADP-ribose 1''-2''-cyclic phosphate (APPR&gt;P). May function as an ADP-ribosylase. The protein is Probable RNA 2'-phosphotransferase of Pyrobaculum aerophilum (strain ATCC 51768 / DSM 7523 / JCM 9630 / CIP 104966 / NBRC 100827 / IM2).